Consider the following 345-residue polypeptide: Fructose-1,6-bisphosphatase class 1 (345 aa).

Mg(2+)-binding residues include E90, D109, L111, and D112. Substrate contacts are provided by residues 112 to 115 (DGSS) and N199. E271 is a binding site for Mg(2+).

Belongs to the FBPase class 1 family. In terms of assembly, homotetramer. Requires Mg(2+) as cofactor.

The protein resides in the cytoplasm. The enzyme catalyses beta-D-fructose 1,6-bisphosphate + H2O = beta-D-fructose 6-phosphate + phosphate. It participates in carbohydrate biosynthesis; Calvin cycle. The chain is Fructose-1,6-bisphosphatase class 1 from Rhodopseudomonas palustris (strain BisB5).